The chain runs to 405 residues: Elongation factor Tu (405 aa).

Residues 10-213 (KEHVNVGTIG…AMDEYIPTPE (204 aa)) enclose the tr-type G domain. The tract at residues 19-26 (GHVDHGKS) is G1. 19 to 26 (GHVDHGKS) contributes to the GTP binding site. Ser26 lines the Mg(2+) pocket. The tract at residues 64-68 (GITIN) is G2. The tract at residues 85-88 (DCPG) is G3. GTP contacts are provided by residues 85–89 (DCPGH) and 140–143 (NKCD). A G4 region spans residues 140-143 (NKCD). Residues 178–180 (SAL) form a G5 region.

Belongs to the TRAFAC class translation factor GTPase superfamily. Classic translation factor GTPase family. EF-Tu/EF-1A subfamily. Monomer.

The protein resides in the cytoplasm. The catalysed reaction is GTP + H2O = GDP + phosphate + H(+). In terms of biological role, GTP hydrolase that promotes the GTP-dependent binding of aminoacyl-tRNA to the A-site of ribosomes during protein biosynthesis. This chain is Elongation factor Tu, found in Aquifex pyrophilus.